The chain runs to 263 residues: Apolipoprotein A-I (263 aa).

The N-terminal stretch at 1 to 18 (MKAVVLAVAVLFLTGSQA) is a signal peptide. 2 tandem repeats follow at residues 66–87 (LKLL…SELG) and 88–109 (PVTQ…QEMN). The tract at residues 66–263 (LKLLDNWDTL…DEVSKKLSAQ (198 aa)) is 10 X approximate tandem repeats. Met-108 is modified (methionine sulfoxide). A 3; half-length repeat occupies 110-120 (KDLVEVKEKVQ). A run of 5 repeats spans residues 121–142 (PYLK…KKVE), 143–164 (PLGT…EKLT), 165–186 (PLGE…AQLG), 187–206 (PYSD…LKDS), and 207–228 (ASLA…EKAK). Residues 229–239 (PALEDLRLGLL) form a 9; half-length repeat. Repeat unit 10 spans residues 240–263 (PVLESLKASFLSSIDEVSKKLSAQ).

The protein belongs to the apolipoprotein A1/A4/E family. Homodimer. Interacts with APOA1BP and CLU. Component of a sperm activating protein complex (SPAP), consisting of APOA1, an immunoglobulin heavy chain, an immunoglobulin light chain and albumin. Interacts with NDRG1. Interacts with SCGB3A2. Interacts with NAXE and YJEFN3. Glycosylated. In terms of processing, palmitoylated. Post-translationally, phosphorylation sites are present in the extracellular medium.

The protein localises to the secreted. Participates in the reverse transport of cholesterol from tissues to the liver for excretion by promoting cholesterol efflux from tissues and by acting as a cofactor for the lecithin cholesterol acyltransferase (LCAT). As part of the SPAP complex, activates spermatozoa motility. In Octodon degus (Degu), this protein is Apolipoprotein A-I (APOA1).